Here is a 274-residue protein sequence, read N- to C-terminus: 3-methyl-2-oxobutanoate hydroxymethyltransferase (274 aa).

Mg(2+)-binding residues include Asp49 and Asp88. 3-methyl-2-oxobutanoate-binding positions include Asp49–Ser50, Asp88, and Lys118. Position 120 (Glu120) interacts with Mg(2+). Catalysis depends on Glu187, which acts as the Proton acceptor.

This sequence belongs to the PanB family. As to quaternary structure, homodecamer; pentamer of dimers. It depends on Mg(2+) as a cofactor.

It localises to the cytoplasm. It catalyses the reaction 3-methyl-2-oxobutanoate + (6R)-5,10-methylene-5,6,7,8-tetrahydrofolate + H2O = 2-dehydropantoate + (6S)-5,6,7,8-tetrahydrofolate. It functions in the pathway cofactor biosynthesis; (R)-pantothenate biosynthesis; (R)-pantoate from 3-methyl-2-oxobutanoate: step 1/2. Functionally, catalyzes the reversible reaction in which hydroxymethyl group from 5,10-methylenetetrahydrofolate is transferred onto alpha-ketoisovalerate to form ketopantoate. This Rhodopseudomonas palustris (strain BisB18) protein is 3-methyl-2-oxobutanoate hydroxymethyltransferase.